A 193-amino-acid polypeptide reads, in one-letter code: MSMQASKLAKIEGLLFVTGDDGISPTEMAELVEISEDEVIQLLEVLSEQMAKEERGIRLARLANRYRLTTKVEHADMYKKLASSPIHGGLSRAALETLAIVAYKQPITRAEIDEVRGVKSEKALQSLVSKLLIEECGRASGTGRAILYGTTPYFLDHFGLESLADLPDLKELDLNEEEQDETDLFFEKLNADL.

The protein belongs to the ScpB family. In terms of assembly, homodimer. Homodimerization may be required to stabilize the binding of ScpA to the Smc head domains. Component of a cohesin-like complex composed of ScpA, ScpB and the Smc homodimer, in which ScpA and ScpB bind to the head domain of Smc. The presence of the three proteins is required for the association of the complex with DNA.

The protein resides in the cytoplasm. Functionally, participates in chromosomal partition during cell division. May act via the formation of a condensin-like complex containing Smc and ScpA that pull DNA away from mid-cell into both cell halves. The polypeptide is Segregation and condensation protein B (Shouchella clausii (strain KSM-K16) (Alkalihalobacillus clausii)).